We begin with the raw amino-acid sequence, 388 residues long: Na(+)/H(+) antiporter NhaA (388 aa).

12 helical membrane-spanning segments follow: residues 14–34, 59–79, 95–115, 125–145, 154–174, 177–197, 200–220, 222–242, 257–277, 295–315, 328–348, and 362–382; these read TIGILLIIATLLALFLENSPL, LLLWVNDGLMAVFFFYVGLEI, TFPAIAALGGMVVPALLFASL, GWAIPTATDIAFALGVLSLLG, VFLMTLAIVDDLGAIIVIALF, TKLSLTSLVVASIALTILFIM, MCVISKGAYILVGVALWVSVL, SGVHATLAGVALALLIPYRIN, GLHLWVNFFILPLFAFANAGV, IMLGLFIGKQLGVFGFGYLAV, LIQFYGVAVLAGIGFTMSLFI, and ADKLAVLIGSLLSGIWGYIVL.

This sequence belongs to the NhaA Na(+)/H(+) (TC 2.A.33) antiporter family.

Its subcellular location is the cell inner membrane. It catalyses the reaction Na(+)(in) + 2 H(+)(out) = Na(+)(out) + 2 H(+)(in). Na(+)/H(+) antiporter that extrudes sodium in exchange for external protons. This Nitratiruptor sp. (strain SB155-2) protein is Na(+)/H(+) antiporter NhaA.